Consider the following 448-residue polypeptide: Putative diacyglycerol O-acyltransferase MT3848 (448 aa).

The active-site Proton acceptor is the histidine 136.

The protein belongs to the long-chain O-acyltransferase family.

It carries out the reaction an acyl-CoA + a 1,2-diacyl-sn-glycerol = a triacyl-sn-glycerol + CoA. It functions in the pathway glycerolipid metabolism; triacylglycerol biosynthesis. This is Putative diacyglycerol O-acyltransferase MT3848 from Mycobacterium tuberculosis (strain CDC 1551 / Oshkosh).